The primary structure comprises 379 residues: Presenilin-associated rhomboid-like protein, mitochondrial (379 aa).

The transit peptide at 1–52 (MAWRGWAQRGWGCGQAWAASVGGRSCEELTAALTPPRLLGRRFNFFIQQKCG) directs the protein to the mitochondrion. Residues 53-101 (FRKAPRKVEPRRSDTGTSGEAYKRSALIPPVEETVFYPSPYPIRSLIKP) are Mitochondrial matrix-facing. Ser65 is subject to Phosphoserine. Thr69 bears the Phosphothreonine mark. Residue Ser70 is modified to Phosphoserine. The chain crosses the membrane as a helical span at residues 102-121 (LFFTVGFTGCAFGSAAIWQY). Over 122-167 (ESLKSRVQSYFDGIKADWLDSIRPQKEGDFRKEINKWWNNLSDGQR) the chain is Mitochondrial intermembrane. The helical transmembrane segment at 168–187 (TVTGIIAANVLVFCLWRVPS) threads the bilayer. The Mitochondrial matrix portion of the chain corresponds to 188-207 (LQRTMIRYFTSNPASKVLCS). The chain crosses the membrane as a helical span at residues 208 to 230 (PMLLSTFSHFSLFHMAANMYVLW). At 231 to 244 (SFSSSIVNILGQEQ) the chain is on the mitochondrial intermembrane side. A helical membrane pass occupies residues 245-262 (FMAVYLSAGVISNFVSYV). Residues 263-273 (GKVATGRYGPS) lie on the Mitochondrial matrix side of the membrane. A helical transmembrane segment spans residues 274 to 292 (LGASGAIMTVLAAVCTKIP). The Nucleophile role is filled by Ser277. Residues 293–295 (EGR) lie on the Mitochondrial intermembrane side of the membrane. The chain crosses the membrane as a helical span at residues 296 to 318 (LAIIFLPMFTFTAGNALKAIIAM). Residues 319–332 (DTAGMILGWKFFDH) lie on the Mitochondrial matrix side of the membrane. The chain crosses the membrane as a helical span at residues 333-354 (AAHLGGALFGIWYVTYGHELIW). His335 is an active-site residue. At 355–379 (KNREPLVKIWHEIRTNGPKKGGGSK) the chain is on the mitochondrial intermembrane side.

This sequence belongs to the peptidase S54 family. As to quaternary structure, interacts with PSEN1 and PSEN2. Binds OPA1. In terms of processing, P-beta is proteolytically processed (beta-cleavage) in a PARL-dependent manner.

Its subcellular location is the mitochondrion inner membrane. The protein localises to the nucleus. The enzyme catalyses Cleaves type-1 transmembrane domains using a catalytic dyad composed of serine and histidine that are contributed by different transmembrane domains.. In terms of biological role, required for the control of apoptosis during postnatal growth. Essential for proteolytic processing of an antiapoptotic form of OPA1 which prevents the release of mitochondrial cytochrome c in response to intrinsic apoptotic signals. Required for the maturation of PINK1 into its 52kDa mature form after its cleavage by mitochondrial-processing peptidase (MPP). Promotes cleavage of serine/threonine-protein phosphatase PGAM5 in damaged mitochondria in response to loss of mitochondrial membrane potential. Mediates differential cleavage of PINK1 and PGAM5 depending on the health status of mitochondria, disassociating from PINK1 and associating with PGAM5 in response to mitochondrial membrane potential loss. Required for processing of CLPB into a form with higher protein disaggregase activity by removing an autoinhibitory N-terminal peptide. Promotes processing of DIABLO/SMAC in the mitochondrion which is required for DIABLO apoptotic activity. Also required for cleavage of STARD7 and TTC19. Promotes changes in mitochondria morphology regulated by phosphorylation of P-beta domain. The chain is Presenilin-associated rhomboid-like protein, mitochondrial (PARL) from Pongo abelii (Sumatran orangutan).